We begin with the raw amino-acid sequence, 209 residues long: uncharacterized protein (209 aa).

The signal sequence occupies residues 1–17; that stretch reads MKRLVTGLLALSLFLAA. The tract at residues 17 to 105 is disordered; sequence ACGQDSDQQK…SNNQANNNQK (89 aa). The N-palmitoyl cysteine moiety is linked to residue Cys18. The S-diacylglycerol cysteine moiety is linked to residue Cys18. The segment covering 23-70 has biased composition (basic and acidic residues); the sequence is DQQKDGNKEKDDKAKTEQQDKKTNDSSKDKKDNKDDSKDVNKDNKDNS. A compositionally biased stretch (low complexity) spans 71 to 105; that stretch reads ANDNQQQSNSNATNNDQNQTNNNQSSNNQANNNQK.

The protein localises to the cell membrane. This is an uncharacterized protein from Staphylococcus aureus (strain COL).